Reading from the N-terminus, the 141-residue chain is 3-hydroxyacyl-[acyl-carrier-protein] dehydratase FabZ (141 aa).

His-49 is an active-site residue.

This sequence belongs to the thioester dehydratase family. FabZ subfamily.

The protein localises to the cytoplasm. It catalyses the reaction a (3R)-hydroxyacyl-[ACP] = a (2E)-enoyl-[ACP] + H2O. Its function is as follows. Involved in unsaturated fatty acids biosynthesis. Catalyzes the dehydration of short chain beta-hydroxyacyl-ACPs and long chain saturated and unsaturated beta-hydroxyacyl-ACPs. The chain is 3-hydroxyacyl-[acyl-carrier-protein] dehydratase FabZ from Clostridium acetobutylicum (strain ATCC 824 / DSM 792 / JCM 1419 / IAM 19013 / LMG 5710 / NBRC 13948 / NRRL B-527 / VKM B-1787 / 2291 / W).